Consider the following 672-residue polypeptide: tRNA 5-methylaminomethyl-2-thiouridine biosynthesis bifunctional protein MnmC (672 aa).

The segment at 1–243 is tRNA (mnm(5)s(2)U34)-methyltransferase; the sequence is MTSIKNAELG…KREMIAGSME (243 aa). The FAD-dependent cmnm(5)s(2)U34 oxidoreductase stretch occupies residues 269 to 672; it reads IGGGIASAAL…LRKGKAITEL (404 aa).

It in the N-terminal section; belongs to the methyltransferase superfamily. tRNA (mnm(5)s(2)U34)-methyltransferase family. This sequence in the C-terminal section; belongs to the DAO family. FAD is required as a cofactor.

The protein resides in the cytoplasm. It catalyses the reaction 5-aminomethyl-2-thiouridine(34) in tRNA + S-adenosyl-L-methionine = 5-methylaminomethyl-2-thiouridine(34) in tRNA + S-adenosyl-L-homocysteine + H(+). Catalyzes the last two steps in the biosynthesis of 5-methylaminomethyl-2-thiouridine (mnm(5)s(2)U) at the wobble position (U34) in tRNA. Catalyzes the FAD-dependent demodification of cmnm(5)s(2)U34 to nm(5)s(2)U34, followed by the transfer of a methyl group from S-adenosyl-L-methionine to nm(5)s(2)U34, to form mnm(5)s(2)U34. In Vibrio campbellii (strain ATCC BAA-1116), this protein is tRNA 5-methylaminomethyl-2-thiouridine biosynthesis bifunctional protein MnmC.